Here is a 349-residue protein sequence, read N- to C-terminus: Protein BCCIP homolog (349 aa).

The segment covering 1–10 has biased composition (basic residues); the sequence is MGRVFKKKGG. Residues 1–65 are disordered; that stretch reads MGRVFKKKGG…DDEEEDEDEQ (65 aa). The segment covering 11–33 has biased composition (basic and acidic residues); sequence AKREAEEEKQEELVMRKKLRKEE. Residues 34–65 are compositionally biased toward acidic residues; that stretch reads EPEPVEDVEEDEDVSDEDDEDIDDEEEDEDEQ.

It belongs to the BCP1 family.

The polypeptide is Protein BCCIP homolog (Caenorhabditis elegans).